We begin with the raw amino-acid sequence, 269 residues long: Phosphate import ATP-binding protein PstB (269 aa).

One can recognise an ABC transporter domain in the interval 22–264 (IKVKNVDFFY…PANKKTEDYI (243 aa)). 55–62 (GSSGSGKS) provides a ligand contact to ATP.

It belongs to the ABC transporter superfamily. Phosphate importer (TC 3.A.1.7) family. In terms of assembly, the complex is composed of two ATP-binding proteins (PstB), two transmembrane proteins (PstC and PstA) and a solute-binding protein (PstS).

Its subcellular location is the cell membrane. The enzyme catalyses phosphate(out) + ATP + H2O = ADP + 2 phosphate(in) + H(+). Part of the ABC transporter complex PstSACB involved in phosphate import. Responsible for energy coupling to the transport system. This is Phosphate import ATP-binding protein PstB from Spiroplasma kunkelii.